We begin with the raw amino-acid sequence, 407 residues long: Putative cell wall shaping protein YabE (407 aa).

A signal peptide spans 1–31 (MKKLFSVKLSKSKVILVAACLLLAGSGTAYA). One can recognise a G5 domain in the interval 206–286 (ITRIEKVTDV…DKVIAVGTKQ (81 aa)).

Its function is as follows. Suggested to be involved in cell wall modification. This Bacillus subtilis (strain 168) protein is Putative cell wall shaping protein YabE (yabE).